The chain runs to 400 residues: Ribosomal RNA large subunit methyltransferase I (400 aa).

The 79-residue stretch at 6 to 84 (FPRLVLAKGR…NEAIDSAFFE (79 aa)) folds into the PUA domain.

Belongs to the methyltransferase superfamily. RlmI family.

It localises to the cytoplasm. It catalyses the reaction cytidine(1962) in 23S rRNA + S-adenosyl-L-methionine = 5-methylcytidine(1962) in 23S rRNA + S-adenosyl-L-homocysteine + H(+). Specifically methylates the cytosine at position 1962 (m5C1962) of 23S rRNA. This Klebsiella pneumoniae subsp. pneumoniae (strain ATCC 700721 / MGH 78578) protein is Ribosomal RNA large subunit methyltransferase I.